The sequence spans 807 residues: Leucine-rich repeat-containing protein 41 (807 aa).

Residues 45–54 form an interaction with Elongin BC complex region; it reads ALFELCGRAV. Phosphoserine is present on residues S155, S276, and S326. 3 disordered regions span residues 269-290, 304-335, and 349-403; these read ASRG…RRPR, TRRK…AIGG, and ASGT…GSGA. A Phosphothreonine modification is found at T327. Over residues 352-381 the composition is skewed to low complexity; the sequence is TKQPSAPAAASASSSTSSKRAPASSASQPK. At S368 the chain carries Phosphoserine. Positions 382–396 are enriched in basic residues; it reads PLKRFKRAAGKKGPR. 7 LRR repeats span residues 482–502, 513–525, 526–550, 608–632, 638–661, 696–723, and 726–747; these read WVSL…IFRL, AGCR…LSDL, FSPL…VLSI, SGSL…LVLQ, NLSL…VLFL, NSTL…VFSE, and SSSL…LLEF.

As to quaternary structure, part of an E3 ubiquitin-protein ligase complex with Elongin BC (ELOB and ELOC), RBX1 and CUL5. Component of a probable ECS(LRRC41) complex which contains CUL5, RNF7/RBX2, Elongin BC and LRRC41. Interacts with CUL5, RNF7, ELOB and ELOC.

Its pathway is protein modification; protein ubiquitination. Probable substrate recognition component of an ECS (Elongin BC-CUL2/5-SOCS-box protein) E3 ubiquitin ligase complex which mediates the ubiquitination and subsequent proteasomal degradation of target proteins. This Mus musculus (Mouse) protein is Leucine-rich repeat-containing protein 41 (Lrrc41).